We begin with the raw amino-acid sequence, 501 residues long: UPF0371 protein CD630_08980 (501 aa).

The protein belongs to the UPF0371 family.

The chain is UPF0371 protein CD630_08980 from Clostridioides difficile (strain 630) (Peptoclostridium difficile).